We begin with the raw amino-acid sequence, 419 residues long: Synaptotagmin-1 (419 aa).

Residues 1–58 (MVSESHHEALAAPPVTTVATVLPSNATEPASPGEGKEDAFSKLKEKFMNELHKIPLPP) are Vesicular-facing. A glycan (N-linked (GlcNAc...) asparagine) is linked at Asn25. A helical transmembrane segment spans residues 59–80 (WALIAIAIVAVLLVLTCCFCIC). S-palmitoyl cysteine attachment occurs at residues Cys75, Cys76, Cys78, Cys80, and Cys83. Topologically, residues 81-419 (KKCLFKKKNK…EVDAMLAVKK (339 aa)) are cytoplasmic. The disordered stretch occupies residues 108 to 139 (KDLGKTMKDQDDDAETGLTDGEEKEEPKEEEK). A compositionally biased stretch (acidic residues) spans 117–131 (QDDDAETGLTDGEEK). Thr126 bears the Phosphothreonine mark. The phospholipid binding stretch occupies residues 133–379 (EPKEEEKLGK…AIGKVFVGYN (247 aa)). The region spanning 139 to 258 (KLGKLQYSLD…DFGHVTEEWR (120 aa)) is the C2 1 domain. Residues Leu169, Asp170, and Asp176 each contribute to the Ca(2+) site. Phosphotyrosine is present on Tyr227. Ca(2+)-binding residues include Asp228, Phe229, Asp230, Ser233, Lys234, and Asp236. Ser262 is subject to Phosphoserine. The region spanning 270 to 403 (KLGDICFSLR…NPRRPIAQWH (134 aa)) is the C2 2 domain. The Ca(2+) site is built by Asp301 and Asp307. Ser340 and Ser342 each carry phosphoserine. Positions 361, 363, and 369 each coordinate Ca(2+).

This sequence belongs to the synaptotagmin family. In terms of assembly, homotetramer. Heterodimer; heterodimerizes with SYT2 in presence of calcium. Interacts with SCAMP5. Interacts with STON2. Forms a complex with SV2B, syntaxin 1 and SNAP25. Interacts with SV2A, SV2B and SV2C. Interacts with RIMS1. Interacts with PRRT2. Interacts with DNAJC5 in a phosphorylation-dependent manner. Interacts (via N-terminus) with RAB3A. Interacts with SYT12. Interacts with calmodulin. Interacts with DNM1 (via C-terminal proline-rich domain (PRD)); this interaction facilitates vesicle fission during clathrin-mediated endocytosis (CME). Requires Ca(2+) as cofactor. In terms of processing, glycosylated.

The protein localises to the cytoplasmic vesicle. Its subcellular location is the secretory vesicle membrane. The protein resides in the secretory vesicle. It is found in the synaptic vesicle membrane. It localises to the chromaffin granule membrane. The protein localises to the cytoplasm. Its function is as follows. Calcium sensor that participates in triggering neurotransmitter release at the synapse. May have a regulatory role in the membrane interactions during trafficking of synaptic vesicles at the active zone of the synapse. It binds acidic phospholipids with a specificity that requires the presence of both an acidic head group and a diacyl backbone. A Ca(2+)-dependent interaction between synaptotagmin and putative receptors for activated protein kinase C has also been reported. It can bind to at least three additional proteins in a Ca(2+)-independent manner; these are neurexins, syntaxin and AP2. Plays a role in dendrite formation by melanocytes. This is Synaptotagmin-1 from Pongo abelii (Sumatran orangutan).